Reading from the N-terminus, the 708-residue chain is Nicastrin (708 aa).

The first 27 residues, 1 to 27, serve as a signal peptide directing secretion; sequence MATTRGGSGPDPGSRGLLLLSFSVVLA. At 28–668 the chain is on the lumenal side; the sequence is GLCGGNSVER…IFLIASKELE (641 aa). Residues N44, N54, and N128 are each glycosylated (N-linked (GlcNAc...) asparagine). C49 and C61 are joined by a disulfide. C139 and C158 are oxidised to a cystine. 2 N-linked (GlcNAc...) asparagine glycosylation sites follow: N186 and N203. 2 cysteine pairs are disulfide-bonded: C194/C212 and C229/C247. N263, N386, N434, N463, N505, N529, N561, N572, N579, N593, and N611 each carry an N-linked (GlcNAc...) asparagine glycan. An intrachain disulfide couples C585 to C619. A helical membrane pass occupies residues 669–689; the sequence is FITLIVGFSTLVFSLIVTYCI. At 690 to 708 the chain is on the cytoplasmic side; it reads NAKADVLFVAPREPGAVSY.

It belongs to the nicastrin family. In terms of assembly, component of the gamma-secretase complex. The functional gamma-secretase complex is composed of at least four polypeptides: a presenilin homodimer (PSEN1 or PSEN2), nicastrin (NCSTN), APH1 (APH1A or APH1B) and PEN2. Binds to proteolytic processed C-terminal fragments C83 and C99 of the amyloid precursor protein (APP). Interacts with PSEN1 and PSEN2. In terms of processing, N-glycosylated.

The protein resides in the membrane. It is found in the cytoplasmic vesicle membrane. The protein localises to the melanosome. Its function is as follows. Essential subunit of the gamma-secretase complex, an endoprotease complex that catalyzes the intramembrane cleavage of integral membrane proteins such as Notch receptors and APP (amyloid-beta precursor protein). The gamma-secretase complex plays a role in Notch and Wnt signaling cascades and regulation of downstream processes via its role in processing key regulatory proteins, and by regulating cytosolic CTNNB1 levels. In Mus musculus (Mouse), this protein is Nicastrin (Ncstn).